Consider the following 561-residue polypeptide: Arginine--tRNA ligase (561 aa).

Residues 135–145 (ANPTGLLHMGN) carry the 'HIGH' region motif.

This sequence belongs to the class-I aminoacyl-tRNA synthetase family. As to quaternary structure, monomer.

The protein localises to the cytoplasm. It carries out the reaction tRNA(Arg) + L-arginine + ATP = L-arginyl-tRNA(Arg) + AMP + diphosphate. This chain is Arginine--tRNA ligase, found in Desulfitobacterium hafniense (strain DSM 10664 / DCB-2).